The following is a 299-amino-acid chain: Hemolysin C homolog (299 aa).

CBS domains lie at 80–142 (MVPR…NGRL) and 145–202 (LIRK…IDDE).

Belongs to the UPF0053 family. Hemolysin C subfamily.

The polypeptide is Hemolysin C homolog (tlyC) (Rickettsia conorii (strain ATCC VR-613 / Malish 7)).